Consider the following 590-residue polypeptide: L-erythrulose kinase (590 aa).

Residues 7–331 (QPSSFARELT…WRAPADAPAF (325 aa)) enclose the DhaK domain. H217 (tele-hemiaminal-histidine intermediate) is an active-site residue. The DhaL domain maps to 366–568 (HCVAAALNAA…LAMILDAVSA (203 aa)). Residues 398 to 401 (HGIG), 441 to 442 (TS), G483, R540, and 553 to 555 (DAG) contribute to the ADP site.

It carries out the reaction L-erythrulose + ATP = L-erythrulose 1-phosphate + ADP + H(+). It functions in the pathway carbohydrate metabolism. In terms of biological role, involved in catabolism of D-apiose. Catalyzes the phosphorylation of L-erythrulose to L-erythrulose 1-phosphate. Can also phosphorylate D-erythrulose and dihydroxyacetone in vitro. This Pectobacterium atrosepticum (strain SCRI 1043 / ATCC BAA-672) (Erwinia carotovora subsp. atroseptica) protein is L-erythrulose kinase.